A 244-amino-acid polypeptide reads, in one-letter code: Tetraspanin-7 (244 aa).

Topologically, residues 1–11 (METKPVITCLK) are cytoplasmic. A helical membrane pass occupies residues 12-35 (TLLIIYSFVFWITGVILLAVGVWG). The Extracellular portion of the chain corresponds to 36–51 (KLTLGTYISLIAENST). N-linked (GlcNAc...) asparagine glycosylation occurs at Asn-49. Residues 52–70 (NAPYVLIGTGTTIVVFGLF) traverse the membrane as a helical segment. Residues 71–81 (GCFATCRGSPW) lie on the Cytoplasmic side of the membrane. Residues 82–107 (MLKLYAMFLSLVFLAELVAGISGFVF) form a helical membrane-spanning segment. The Extracellular portion of the chain corresponds to 108-208 (RHEIKDTFLR…LVTSFMETNM (101 aa)). Residues Asn-150, Asn-153, Asn-172, and Asn-183 are each glycosylated (N-linked (GlcNAc...) asparagine). The chain crosses the membrane as a helical span at residues 209-229 (GIIAGVAFGIAFSQLIGMLLA). The Cytoplasmic portion of the chain corresponds to 230–244 (CCLSRFITANQYEMV).

It belongs to the tetraspanin (TM4SF) family.

It localises to the membrane. In terms of biological role, may be involved in cell proliferation and cell motility. The polypeptide is Tetraspanin-7 (TSPAN7) (Pan troglodytes (Chimpanzee)).